A 247-amino-acid polypeptide reads, in one-letter code: Tyrosine recombinase XerD-like (247 aa).

A Core-binding (CB) domain is found at 1-72 (MIKHIEAFLA…TVNQFLHYLY (72 aa)). The 157-residue stretch at 91–247 (STKVPFTYQL…PITLEKYYRL (157 aa)) folds into the Tyr recombinase domain. Residue Arg-212 is part of the active site. Tyr-244 functions as the O-(3'-phospho-DNA)-tyrosine intermediate in the catalytic mechanism.

This sequence belongs to the 'phage' integrase family. XerD-like subfamily.

Its subcellular location is the cytoplasm. Its function is as follows. Putative tyrosine recombinase. Not involved in the cutting and rejoining of the recombining DNA molecules on dif(SL) site. This Streptococcus uberis (strain ATCC BAA-854 / 0140J) protein is Tyrosine recombinase XerD-like.